We begin with the raw amino-acid sequence, 132 residues long: Large ribosomal subunit protein uL14 (132 aa).

This sequence belongs to the universal ribosomal protein uL14 family. As to quaternary structure, part of the 50S ribosomal subunit. Forms a cluster with proteins L3 and L24e, part of which may contact the 16S rRNA in 2 intersubunit bridges.

Its function is as follows. Binds to 23S rRNA. Forms part of two intersubunit bridges in the 70S ribosome. This is Large ribosomal subunit protein uL14 from Methanococcus maripaludis (strain C7 / ATCC BAA-1331).